Reading from the N-terminus, the 516-residue chain is Probable serine/threonine-protein kinase WNK3 (516 aa).

Residues 22-280 (GRYKEVLGKG…AKELLDDPFL (259 aa)) form the Protein kinase domain. Residues 102 to 105 (TEVF) and Lys152 contribute to the ATP site. Residue Asp169 is the Proton acceptor of the active site. Positions 426–451 (SSPKAGAGDSRSPFAPRSNSKLSSAQ) are disordered. Polar residues predominate over residues 442 to 451 (RSNSKLSSAQ). Residues 457–490 (EVGVIVEKLESLLRKQREEIEEMQRDQERIVTEF) are a coiled coil.

The protein belongs to the protein kinase superfamily. Ser/Thr protein kinase family. WNK subfamily.

The catalysed reaction is L-seryl-[protein] + ATP = O-phospho-L-seryl-[protein] + ADP + H(+). It carries out the reaction L-threonyl-[protein] + ATP = O-phospho-L-threonyl-[protein] + ADP + H(+). In terms of biological role, may regulate flowering time by modulating the photoperiod pathway. In Arabidopsis thaliana (Mouse-ear cress), this protein is Probable serine/threonine-protein kinase WNK3 (WNK3).